Consider the following 62-residue polypeptide: UPF0434 protein R03186 (62 aa).

It belongs to the UPF0434 family.

The protein is UPF0434 protein R03186 of Rhizobium meliloti (strain 1021) (Ensifer meliloti).